A 430-amino-acid chain; its full sequence is Trigger factor (430 aa).

One can recognise a PPIase FKBP-type domain in the interval 157–242 (GDLVALETWS…AVEVSEPVLP (86 aa)).

The protein belongs to the FKBP-type PPIase family. Tig subfamily.

It localises to the cytoplasm. The enzyme catalyses [protein]-peptidylproline (omega=180) = [protein]-peptidylproline (omega=0). Involved in protein export. Acts as a chaperone by maintaining the newly synthesized protein in an open conformation. Functions as a peptidyl-prolyl cis-trans isomerase. This chain is Trigger factor, found in Xanthomonas euvesicatoria pv. vesicatoria (strain 85-10) (Xanthomonas campestris pv. vesicatoria).